A 474-amino-acid chain; its full sequence is Nitrogenase vanadium-iron protein alpha chain (474 aa).

3 residues coordinate [8Fe-7S] cluster: C49, C75, and C138. The [7Fe-V-9S-C-homocitryl] cluster site is built by C257 and H423.

The protein belongs to the NifD/NifK/NifE/NifN family. Hexamer of two alpha, two beta, and two delta chains. [8Fe-7S] cluster serves as cofactor. Requires [7Fe-V-9S-C-homocitryl] cluster as cofactor.

The catalysed reaction is N2 + 8 reduced [2Fe-2S]-[ferredoxin] + 16 ATP + 16 H2O = H2 + 8 oxidized [2Fe-2S]-[ferredoxin] + 2 NH4(+) + 16 ADP + 16 phosphate + 6 H(+). In terms of biological role, this vanadium-iron protein is part of the nitrogenase complex that catalyzes the key enzymatic reactions in nitrogen fixation. This chain is Nitrogenase vanadium-iron protein alpha chain (vnfD), found in Azotobacter vinelandii.